The chain runs to 383 residues: ATP phosphoribosyltransferase regulatory subunit (383 aa).

It belongs to the class-II aminoacyl-tRNA synthetase family. HisZ subfamily. Heteromultimer composed of HisG and HisZ subunits.

It is found in the cytoplasm. It participates in amino-acid biosynthesis; L-histidine biosynthesis; L-histidine from 5-phospho-alpha-D-ribose 1-diphosphate: step 1/9. In terms of biological role, required for the first step of histidine biosynthesis. May allow the feedback regulation of ATP phosphoribosyltransferase activity by histidine. The protein is ATP phosphoribosyltransferase regulatory subunit of Paraburkholderia xenovorans (strain LB400).